Reading from the N-terminus, the 209-residue chain is Guanylate kinase (209 aa).

The Guanylate kinase-like domain maps to Gly9–Thr188. Ser16–Thr23 contributes to the ATP binding site.

This sequence belongs to the guanylate kinase family.

The protein resides in the cytoplasm. It carries out the reaction GMP + ATP = GDP + ADP. Its function is as follows. Essential for recycling GMP and indirectly, cGMP. In Ehrlichia chaffeensis (strain ATCC CRL-10679 / Arkansas), this protein is Guanylate kinase.